The sequence spans 462 residues: Glycine--tRNA ligase (462 aa).

Arg100 and Glu175 together coordinate substrate. ATP contacts are provided by residues 207–209 (RNE), 217–222 (FRTREF), 291–292 (EL), and 335–338 (GADR). 222–226 (FEQME) contributes to the substrate binding site. Residue 331–335 (EPSLG) participates in substrate binding.

This sequence belongs to the class-II aminoacyl-tRNA synthetase family. In terms of assembly, homodimer.

Its subcellular location is the cytoplasm. It carries out the reaction tRNA(Gly) + glycine + ATP = glycyl-tRNA(Gly) + AMP + diphosphate. In terms of biological role, catalyzes the attachment of glycine to tRNA(Gly). This is Glycine--tRNA ligase from Clostridium acetobutylicum (strain ATCC 824 / DSM 792 / JCM 1419 / IAM 19013 / LMG 5710 / NBRC 13948 / NRRL B-527 / VKM B-1787 / 2291 / W).